Reading from the N-terminus, the 151-residue chain is Protein ECM12 (151 aa).

An N-linked (GlcNAc...) asparagine glycan is attached at asparagine 2. The next 2 helical transmembrane spans lie at 17–37 (LLVFYFHIKQQAIMPFFIFFF) and 51–71 (AFLAKHVFVGVCSPFFVVGFF). Asparagine 132 and asparagine 137 each carry an N-linked (GlcNAc...) asparagine glycan.

The protein localises to the membrane. Functionally, may be involved in cell wall organization and biogenesis. The polypeptide is Protein ECM12 (ECM12) (Saccharomyces cerevisiae (strain ATCC 204508 / S288c) (Baker's yeast)).